The primary structure comprises 152 residues: Histone H2B.9 (152 aa).

2 stretches are compositionally biased toward basic and acidic residues: residues 1–16 (MAPK…KPAE) and 34–52 (EKRL…EGKK). Positions 1–59 (MAPKAEKKPAAKKPAEEEPAAEKAPAAGKKPKAEKRLPAGKGEKGGAGEGKKAGRKKGK) are disordered. 2 positions are modified to N6-acetyllysine: K7 and K35. Residue K148 forms a Glycyl lysine isopeptide (Lys-Gly) (interchain with G-Cter in ubiquitin) linkage.

This sequence belongs to the histone H2B family. In terms of assembly, the nucleosome is a histone octamer containing two molecules each of H2A, H2B, H3 and H4 assembled in one H3-H4 heterotetramer and two H2A-H2B heterodimers. The octamer wraps approximately 147 bp of DNA. Can be acetylated to form H2BK6ac and H2BK33ac. In terms of processing, monoubiquitinated by BRE1 to form H2BK143ub1 and deubiquitinated by UBP26. Required for heterochromatic histone H3 di- and trimethylation at H3K4me. May give a specific tag for epigenetic transcriptional activation.

The protein resides in the nucleus. It localises to the chromosome. Functionally, core component of nucleosome. Nucleosomes wrap and compact DNA into chromatin, limiting DNA accessibility to the cellular machineries which require DNA as a template. Histones thereby play a central role in transcription regulation, DNA repair, DNA replication and chromosomal stability. DNA accessibility is regulated via a complex set of post-translational modifications of histones, also called histone code, and nucleosome remodeling. This Oryza sativa subsp. indica (Rice) protein is Histone H2B.9 (H2B.9).